We begin with the raw amino-acid sequence, 468 residues long: 6-phosphogluconate dehydrogenase, decarboxylating (468 aa).

Residues 10–15 (GMAVMG), 33–35 (NRS), 74–76 (VKA), and Asn102 contribute to the NADP(+) site. Residues Asn102 and 128 to 130 (SGG) contribute to the substrate site. Catalysis depends on Lys183, which acts as the Proton acceptor. 186-187 (HN) serves as a coordination point for substrate. The active-site Proton donor is the Glu190. Substrate-binding residues include Tyr191, Lys260, Arg287, Arg445, and His451.

This sequence belongs to the 6-phosphogluconate dehydrogenase family. In terms of assembly, homodimer.

The enzyme catalyses 6-phospho-D-gluconate + NADP(+) = D-ribulose 5-phosphate + CO2 + NADPH. It functions in the pathway carbohydrate degradation; pentose phosphate pathway; D-ribulose 5-phosphate from D-glucose 6-phosphate (oxidative stage): step 3/3. Its function is as follows. Catalyzes the oxidative decarboxylation of 6-phosphogluconate to ribulose 5-phosphate and CO(2), with concomitant reduction of NADP to NADPH. The polypeptide is 6-phosphogluconate dehydrogenase, decarboxylating (gnd) (Klebsiella pneumoniae).